Reading from the N-terminus, the 136-residue chain is Antistasin (136 aa).

An N-terminal signal peptide occupies residues 1–17 (MIKLAILLLFTVAIVRC). Q18 carries the pyrrolidone carboxylic acid modification. Disulfide bonds link C25-C36, C30-C43, C45-C65, C50-C68, C54-C70, C79-C90, C84-C97, C99-C120, C105-C123, and C109-C125. Positions 45–70 (CSGVRCRMHCPHGFQRSRYGCEFCKC) constitute an Antistasin-like 1 domain. An Antistasin-like 2 domain is found at 100–125 (KIDINCRKTCPNGLKRDKLGCEYCEC). Heparin-binding positions include 114-117 (KRDK) and 128-135 (KRKLIPRL).

This sequence belongs to the protease inhibitor I15 (antistasin) family.

The protein localises to the secreted. Its function is as follows. This highly disulfide-bonded protein is a potent inhibitor of factor Xa. May have therapeutic utility as an anticoagulant. Also exhibits a strong metastatic activity. The sequence is that of Antistasin from Haementeria officinalis (Mexican leech).